Reading from the N-terminus, the 834-residue chain is Probable receptor-like protein kinase At2g23200 (834 aa).

Positions 1–28 are cleaved as a signal peptide; the sequence is MENFCFQDSVSLFITIMVLVLLPRLSLS. The Extracellular portion of the chain corresponds to 29 to 405; the sequence is DTSTYTRPEN…SSSRVHIITG (377 aa). 10 N-linked (GlcNAc...) asparagine glycosylation sites follow: asparagine 61, asparagine 149, asparagine 221, asparagine 246, asparagine 277, asparagine 289, asparagine 314, asparagine 352, asparagine 361, and asparagine 394. A helical membrane pass occupies residues 406–426; that stretch reads CAVAAAAASALVFSLLFMVFL. The Cytoplasmic segment spans residues 427 to 834; the sequence is KRRRSKKTKP…FSQLKISDAR (408 aa). Positions 488–761 constitute a Protein kinase domain; it reads FDEQLLIGKG…RDVIWDLEYV (274 aa). ATP contacts are provided by residues 494 to 502 and lysine 516; that span reads IGKGGFGYV. Aspartate 613 acts as the Proton acceptor in catalysis.

It belongs to the protein kinase superfamily. Ser/Thr protein kinase family.

Its subcellular location is the membrane. This chain is Probable receptor-like protein kinase At2g23200, found in Arabidopsis thaliana (Mouse-ear cress).